Consider the following 335-residue polypeptide: Tetraacyldisaccharide 4'-kinase (335 aa).

59–66 serves as a coordination point for ATP; that stretch reads TAGGNGKT.

Belongs to the LpxK family.

The catalysed reaction is a lipid A disaccharide + ATP = a lipid IVA + ADP + H(+). It functions in the pathway glycolipid biosynthesis; lipid IV(A) biosynthesis; lipid IV(A) from (3R)-3-hydroxytetradecanoyl-[acyl-carrier-protein] and UDP-N-acetyl-alpha-D-glucosamine: step 6/6. Transfers the gamma-phosphate of ATP to the 4'-position of a tetraacyldisaccharide 1-phosphate intermediate (termed DS-1-P) to form tetraacyldisaccharide 1,4'-bis-phosphate (lipid IVA). This Aliivibrio salmonicida (strain LFI1238) (Vibrio salmonicida (strain LFI1238)) protein is Tetraacyldisaccharide 4'-kinase.